We begin with the raw amino-acid sequence, 82 residues long: Mu-conotoxin MrVIB (82 aa).

An N-terminal signal peptide occupies residues 1 to 22; the sequence is MKLTCMMIVAVLFLTAWTLVMA. A propeptide spanning residues 23–49 is cleaved from the precursor; it reads DDSNNGLANHFLKSRDEMEDPEASKLE. 3 disulfide bridges follow: Cys53-Cys71, Cys60-Cys76, and Cys70-Cys81.

Belongs to the conotoxin O1 superfamily. In terms of tissue distribution, expressed by the venom duct.

It is found in the secreted. MuO-conotoxins are gating-modifier toxins that inhibit sodium current by trapping the domain II voltage sensor in the closed position to prevent opening of the sodium channel. This toxin has a preference for Nav1.4/SCN4A over Nav1.2/SCN2A sodium channels. It blocks Nav channels by interacting mainly with the C-terminal part of the pore loop of domain-3. It also blocks fast-inactivating calcium current. Blocks Nav1.8/SCN10A sodium channels and has potent and long-lasting local anesthetic effects. It can also block propagation of action potentials in A- and C-fibers in sciatic nerve as well as skeletal muscle in isolated preparations. The chain is Mu-conotoxin MrVIB from Conus marmoreus (Marble cone).